Reading from the N-terminus, the 622-residue chain is 1-deoxy-D-xylulose-5-phosphate synthase (622 aa).

Residues H74 and 115–117 (GHS) each bind thiamine diphosphate. Residue D146 coordinates Mg(2+). Residues 147–148 (GA), N175, Y286, and E366 each bind thiamine diphosphate. N175 is a Mg(2+) binding site.

The protein belongs to the transketolase family. DXPS subfamily. In terms of assembly, homodimer. The cofactor is Mg(2+). Thiamine diphosphate serves as cofactor.

The catalysed reaction is D-glyceraldehyde 3-phosphate + pyruvate + H(+) = 1-deoxy-D-xylulose 5-phosphate + CO2. Its pathway is metabolic intermediate biosynthesis; 1-deoxy-D-xylulose 5-phosphate biosynthesis; 1-deoxy-D-xylulose 5-phosphate from D-glyceraldehyde 3-phosphate and pyruvate: step 1/1. Catalyzes the acyloin condensation reaction between C atoms 2 and 3 of pyruvate and glyceraldehyde 3-phosphate to yield 1-deoxy-D-xylulose-5-phosphate (DXP). In Carboxydothermus hydrogenoformans (strain ATCC BAA-161 / DSM 6008 / Z-2901), this protein is 1-deoxy-D-xylulose-5-phosphate synthase.